A 262-amino-acid polypeptide reads, in one-letter code: MRYQNMFETLKKHEKMAFIPFVTLGDPNYELSFEIIKTLIISGVSALELGLAFSDPVADGITIQASHLRALKHASMAKNFQLLKKIRDYNHNIPIGLLAYANLIFSYGVDGFYAQAKECGIDSVLIADMPLIEKELVIKSAQKHQIKQIFIASPNASSKDLEQVATHSQGYIYALARSGVTGASRILENDSSAIIKTLKAFSPTPALLGFGISKKEHITNAKGMGADGVICGSALVKIIEENLNNENAMLEKIKGFIGGMIF.

Residues Glu48 and Asp59 each act as proton acceptor in the active site.

Belongs to the TrpA family. Tetramer of two alpha and two beta chains.

It catalyses the reaction (1S,2R)-1-C-(indol-3-yl)glycerol 3-phosphate + L-serine = D-glyceraldehyde 3-phosphate + L-tryptophan + H2O. The protein operates within amino-acid biosynthesis; L-tryptophan biosynthesis; L-tryptophan from chorismate: step 5/5. The alpha subunit is responsible for the aldol cleavage of indoleglycerol phosphate to indole and glyceraldehyde 3-phosphate. This is Tryptophan synthase alpha chain from Helicobacter pylori (strain ATCC 700392 / 26695) (Campylobacter pylori).